Consider the following 934-residue polypeptide: Complement component C6 (934 aa).

The signal sequence occupies residues 1–21 (MARRSVLYFILLNALINKGQA). Disulfide bonds link C22/C61, C24/C65, C35/C73, C39/C78, C82/C117, C93/C127, C96/C133, C140/C151, C146/C164, C158/C173, and C180/C218. TSP type-1 domains follow at residues 22 to 79 (CFCD…QRCP) and 81 to 134 (NCLL…KLCK). Residue W29 is glycosylated (C-linked (Man) tryptophan). A C-linked (Man) tryptophan; partial glycan is attached at W32. A glycan (O-linked (Fuc...) threonine) is linked at T38. Residue W90 is glycosylated (C-linked (Man) tryptophan; partial). One can recognise an LDL-receptor class A domain in the interval 138 to 175 (ADCKNKFRCDSGRCIARKLECNGENDCGDNSDERDCGR). 6 residues coordinate Ca(2+): L156, N159, E161, D163, D169, and E170. The 347-residue stretch at 176 to 522 (TKAVCTRKYN…EYAAKFDPCQ (347 aa)) folds into the MACPF domain. A beta stranded membrane pass occupies residues 278 to 290 (SFSVPIFYSSKRS). Residue N324 is glycosylated (N-linked (GlcNAc...) asparagine). T392 carries an O-linked (Fuc...) threonine glycan. Intrachain disulfides connect C399-C420, C499-C623, C521-C570, C523-C539, C526-C541, C543-C552, C577-C611, C589-C601, C644-C686, C672-C699, C704-C746, C732-C761, C773-C823, C784-C801, C786-C837, and C793-C816. Residues 402-415 (IETKKRVLFAKKTK) traverse the membrane as a beta stranded segment. The 31-residue stretch at 523-553 (CAPCPNNGRPTLSGTECLCVCQSGTYGENCE) folds into the EGF-like domain. Residues 565–612 (DGQWGCWSSWSTCDATYKRSRTRECNNPAPQRGGKRCEGEKRQEEDCT) form the TSP type-1 3 domain. 3 C-linked (Man) tryptophan; partial glycosylation sites follow: W568, W571, and W574. CCP stretches follow at residues 611–688 (CTFS…RCLP) and 689–765 (DGTW…EKDT). 2 Sushi domains span residues 642–701 (SGCP…ECQR) and 702–763 (TECI…TCEK). The segment at 642–934 (SGCPQPVPPE…EILHPGKCLA (293 aa)) is C5b-binding domain. A factor I module (FIM) 1 region spans residues 766-840 (LTKLKGHCQL…FLHIGSCQDG (75 aa)). Residues 780 to 839 (SGSECICMSPEEDCSHHSEDLCVFDTDSNDYFTSPACKFLAEKCLNNQQLHFLHIGSCQD) form the Kazal-like 1 domain. N855 carries N-linked (GlcNAc...) asparagine glycosylation. A factor I module (FIM) 2 region spans residues 858–934 (KKESCGYDTC…EILHPGKCLA (77 aa)). Intrachain disulfides connect C862-C873, C867-C919, C880-C897, C882-C932, and C888-C912. One can recognise a Kazal-like 2 domain in the interval 876–934 (STSKCVCLLPPQCFKGGNQLYCVKMGSSTSEKTLNICEVGTIRCANRKMEILHPGKCLA).

It belongs to the complement C6/C7/C8/C9 family. As to quaternary structure, component of the membrane attack complex (MAC), composed of complement C5b, C6, C7, C8A, C8B, C8G and multiple copies of the pore-forming subunit C9. Post-translationally, all cysteine residues are assumed to be cross-linked to one another. Individual modules containing an even number of conserved cysteine residues are supposed to have disulfide linkages only within the same module.

It localises to the secreted. The protein localises to the target cell membrane. With respect to regulation, membrane attack complex (MAC) assembly is inhibited by CD59, thereby protecting self-cells from damage during complement activation. MAC assembly is also inhibited by clusterin (CLU) chaperones that inhibit polymerization of C9. Functionally, component of the membrane attack complex (MAC), a multiprotein complex activated by the complement cascade, which inserts into a target cell membrane and forms a pore, leading to target cell membrane rupture and cell lysis. The MAC is initiated by proteolytic cleavage of C5 into complement C5b in response to the classical, alternative, lectin and GZMK complement pathways. The complement pathways consist in a cascade of proteins that leads to phagocytosis and breakdown of pathogens and signaling that strengthens the adaptive immune system. Together with component C5b, involved in MAC complex assembly: complement C5b and C6 associate with the outer leaflet of target cell membrane, reducing the energy for membrane bending. This is Complement component C6 from Homo sapiens (Human).